A 118-amino-acid polypeptide reads, in one-letter code: Large ribosomal subunit protein bL19 (118 aa).

This sequence belongs to the bacterial ribosomal protein bL19 family.

In terms of biological role, this protein is located at the 30S-50S ribosomal subunit interface and may play a role in the structure and function of the aminoacyl-tRNA binding site. In Helicobacter pylori (strain P12), this protein is Large ribosomal subunit protein bL19.